A 1012-amino-acid chain; its full sequence is Tolloid-like protein 2 (1012 aa).

A signal peptide spans 1–21; that stretch reads MPLATTLGTLVLLLLLPLPRG. Positions 22–146 are excised as a propeptide; it reads AEVTGDHSNV…AKTFSARVRR (125 aa). Positions 83–135 are disordered; sequence KPSIDKPGHDTGGLEETSARWPNDTASNASIQAPRKDGKDATTFLPNPGTSNT. Residues 126–135 show a composition bias toward polar residues; sequence FLPNPGTSNT. The region spanning 146 to 346 is the Peptidase M12A domain; the sequence is RATTSRTERI…AQARKLYKCP (201 aa). N-linked (GlcNAc...) asparagine glycosylation occurs at Asn168. 4 disulfide bridges follow: Cys189/Cys345, Cys209/Cys231, Cys211/Cys212, and Cys348/Cys374. Zn(2+) is bound at residue His239. Residue Glu240 is part of the active site. Zn(2+) contacts are provided by His243 and His249. CUB domains are found at residues 348–460 and 461–573; these read CGET…YEAM and CGGD…FFKE. Asn358 and Asn389 each carry an N-linked (GlcNAc...) asparagine glycan. Intrachain disulfides connect Cys401/Cys423, Cys461/Cys487, Cys514/Cys536, Cys577/Cys589, Cys585/Cys598, Cys600/Cys613, Cys617/Cys643, Cys670/Cys692, Cys733/Cys744, Cys740/Cys753, Cys755/Cys768, and Cys773/Cys799. Residues 573 to 614 form the EGF-like 1; calcium-binding domain; sequence EVDECSWPDHGGCEQRCVNTLGSYTCACDPGYELAADKKTCE. One can recognise a CUB 3 domain in the interval 617 to 729; it reads CGGFITKLNG…RGFRAHFFSD (113 aa). Asn625 carries N-linked (GlcNAc...) asparagine glycosylation. In terms of domain architecture, EGF-like 2; calcium-binding spans 729 to 769; it reads DKDECAKDNGGCQQECVNTFGSYLCRCRNGYRLHENGHDCK. 2 CUB domains span residues 773-885 and 886-1002; these read CAYK…HSTE and CGGR…YTST. Asn802 carries N-linked (GlcNAc...) asparagine glycosylation. Intrachain disulfides connect Cys826-Cys848, Cys886-Cys916, and Cys943-Cys965. 2 positions are modified to omega-N-methylarginine: Arg960 and Arg963.

It depends on Zn(2+) as a cofactor.

Its subcellular location is the secreted. Its function is as follows. Protease which specifically processes pro-lysyl oxidase. Required for the embryonic development. Predominant protease, which in the development, influences dorsal-ventral patterning and skeletogenesis. This is Tolloid-like protein 2 (Tll2) from Mus musculus (Mouse).